The sequence spans 440 residues: VGFKAGVKDYRLTYYTPEYKTKDTDILAAFRMTPQPGVPAEEAGAAVAAESSTGTWTTVWTDGLTSLDRYKGRCYDIEPVAGEENQYIAYVAYPLDLFEEGSVTNLFTSIVGNVFGFKALRALRLEDLRIPPAYSKTFIGPPHGIQVERDKLNKYGRPLLGCTIKPKLGLSAKNYGRAVYECLRGGLDFTKDDENVNSQPFMRWRDRFLFVAEALFKSQAETGEIKGHYLNATAGTCEEMLKRAVFARELGAPIVMHDYLTGGFTANTSLAFYCRDNGLLLHIHRAMHAVIDRQRNHGIHFRVLAKALRMSGGDHIHAGTVVGKLEGEREVTLGFVDLLRDDYIEKDRSRGIYFTQDWVSMPGVLPVASGGIHVWHMPALTEIFGDDSVLQFGGGTLGHPWGNAPGAVANRVALEACVQARNEGRDLAREGNTIIREASK.

N6,N6,N6-trimethyllysine is present on K4. Residues N113 and T163 each coordinate substrate. K165 acts as the Proton acceptor in catalysis. K167 contributes to the substrate binding site. K191, D193, and E194 together coordinate Mg(2+). K191 is modified (N6-carboxylysine). H284 acts as the Proton acceptor in catalysis. R285, H317, and S369 together coordinate substrate.

The protein belongs to the RuBisCO large chain family. Type I subfamily. As to quaternary structure, heterohexadecamer of 8 large chains and 8 small chains; disulfide-linked. The disulfide link is formed within the large subunit homodimers. It depends on Mg(2+) as a cofactor. Post-translationally, the disulfide bond which can form in the large chain dimeric partners within the hexadecamer appears to be associated with oxidative stress and protein turnover.

The protein localises to the plastid. It localises to the chloroplast. The enzyme catalyses 2 (2R)-3-phosphoglycerate + 2 H(+) = D-ribulose 1,5-bisphosphate + CO2 + H2O. It catalyses the reaction D-ribulose 1,5-bisphosphate + O2 = 2-phosphoglycolate + (2R)-3-phosphoglycerate + 2 H(+). In terms of biological role, ruBisCO catalyzes two reactions: the carboxylation of D-ribulose 1,5-bisphosphate, the primary event in carbon dioxide fixation, as well as the oxidative fragmentation of the pentose substrate in the photorespiration process. Both reactions occur simultaneously and in competition at the same active site. The chain is Ribulose bisphosphate carboxylase large chain from Matteuccia struthiopteris (European ostrich fern).